The following is a 111-amino-acid chain: Phosphoribosyl-ATP pyrophosphatase (111 aa).

This sequence belongs to the PRA-PH family.

It is found in the cytoplasm. It catalyses the reaction 1-(5-phospho-beta-D-ribosyl)-ATP + H2O = 1-(5-phospho-beta-D-ribosyl)-5'-AMP + diphosphate + H(+). Its pathway is amino-acid biosynthesis; L-histidine biosynthesis; L-histidine from 5-phospho-alpha-D-ribose 1-diphosphate: step 2/9. This chain is Phosphoribosyl-ATP pyrophosphatase, found in Pseudomonas paraeruginosa (strain DSM 24068 / PA7) (Pseudomonas aeruginosa (strain PA7)).